A 98-amino-acid polypeptide reads, in one-letter code: NADH-ubiquinone oxidoreductase chain 4L (98 aa).

The next 2 membrane-spanning stretches (helical) occupy residues 1-21 (MTLIHFSFCSAFILGLTGLAL) and 48-68 (PLHLTIYLSSMMLYIMLPFAA).

The protein belongs to the complex I subunit 4L family. Core subunit of respiratory chain NADH dehydrogenase (Complex I) which is composed of 45 different subunits.

It is found in the mitochondrion inner membrane. The enzyme catalyses a ubiquinone + NADH + 5 H(+)(in) = a ubiquinol + NAD(+) + 4 H(+)(out). Core subunit of the mitochondrial membrane respiratory chain NADH dehydrogenase (Complex I) which catalyzes electron transfer from NADH through the respiratory chain, using ubiquinone as an electron acceptor. Part of the enzyme membrane arm which is embedded in the lipid bilayer and involved in proton translocation. This chain is NADH-ubiquinone oxidoreductase chain 4L (mt-nd4l), found in Xenopus laevis (African clawed frog).